Consider the following 480-residue polypeptide: Aspartyl/glutamyl-tRNA(Asn/Gln) amidotransferase subunit B (480 aa).

The protein belongs to the GatB/GatE family. GatB subfamily. Heterotrimer of A, B and C subunits.

The catalysed reaction is L-glutamyl-tRNA(Gln) + L-glutamine + ATP + H2O = L-glutaminyl-tRNA(Gln) + L-glutamate + ADP + phosphate + H(+). It catalyses the reaction L-aspartyl-tRNA(Asn) + L-glutamine + ATP + H2O = L-asparaginyl-tRNA(Asn) + L-glutamate + ADP + phosphate + 2 H(+). Its function is as follows. Allows the formation of correctly charged Asn-tRNA(Asn) or Gln-tRNA(Gln) through the transamidation of misacylated Asp-tRNA(Asn) or Glu-tRNA(Gln) in organisms which lack either or both of asparaginyl-tRNA or glutaminyl-tRNA synthetases. The reaction takes place in the presence of glutamine and ATP through an activated phospho-Asp-tRNA(Asn) or phospho-Glu-tRNA(Gln). This is Aspartyl/glutamyl-tRNA(Asn/Gln) amidotransferase subunit B from Saccharophagus degradans (strain 2-40 / ATCC 43961 / DSM 17024).